Consider the following 72-residue polypeptide: Large ribosomal subunit protein bL28 (72 aa).

This sequence belongs to the bacterial ribosomal protein bL28 family.

This is Large ribosomal subunit protein bL28 from Chlorobium phaeobacteroides (strain DSM 266 / SMG 266 / 2430).